Consider the following 194-residue polypeptide: Adenylate kinase isoenzyme 1 (194 aa).

19–24 (GSGKGT) lines the ATP pocket. The tract at residues 39 to 68 (STGDLLRAEVSSGSERGKKLQAIMEKGELV) is NMP. AMP is bound by residues threonine 40, arginine 45, 66–68 (ELV), 95–98 (GYPR), and glutamine 102. The tract at residues 132-142 (KRGETSGRVDD) is LID. An ATP-binding site is contributed by arginine 133. Positions 139 and 150 each coordinate AMP. Glycine 178 serves as a coordination point for ATP.

Belongs to the adenylate kinase family. AK1 subfamily. In terms of assembly, monomer. Mg(2+) serves as cofactor. Skeletal muscle.

It is found in the cytoplasm. The catalysed reaction is a ribonucleoside 5'-phosphate + ATP = a ribonucleoside 5'-diphosphate + ADP. The enzyme catalyses AMP + ATP = 2 ADP. It carries out the reaction dAMP + ATP = dADP + ADP. It catalyses the reaction dATP + AMP = dADP + ADP. The catalysed reaction is dAMP + dATP = 2 dADP. The enzyme catalyses a 2'-deoxyribonucleoside 5'-diphosphate + ATP = a 2'-deoxyribonucleoside 5'-triphosphate + ADP. It carries out the reaction a ribonucleoside 5'-diphosphate + ATP = a ribonucleoside 5'-triphosphate + ADP. It catalyses the reaction CDP + GTP = CTP + GDP. The catalysed reaction is GDP + ATP = GTP + ADP. The enzyme catalyses UDP + ATP = UTP + ADP. It carries out the reaction GTP + UDP = UTP + GDP. It catalyses the reaction dTDP + GTP = dTTP + GDP. The catalysed reaction is dCDP + GTP = dCTP + GDP. The enzyme catalyses dGDP + ATP = dGTP + ADP. It carries out the reaction dADP + GTP = dATP + GDP. It catalyses the reaction thiamine diphosphate + ADP = thiamine triphosphate + AMP. Catalyzes the reversible transfer of the terminal phosphate group between ATP and AMP. Also displays broad nucleoside diphosphate kinase activity. Plays an important role in cellular energy homeostasis and in adenine nucleotide metabolism. Also catalyzes at a very low rate the synthesis of thiamine triphosphate (ThTP) from thiamine diphosphate (ThDP) and ADP. This Gallus gallus (Chicken) protein is Adenylate kinase isoenzyme 1.